The primary structure comprises 900 residues: Alanine--tRNA ligase (900 aa).

Residues His568, His572, Cys672, and His676 each coordinate Zn(2+).

This sequence belongs to the class-II aminoacyl-tRNA synthetase family. It depends on Zn(2+) as a cofactor.

Its subcellular location is the cytoplasm. The enzyme catalyses tRNA(Ala) + L-alanine + ATP = L-alanyl-tRNA(Ala) + AMP + diphosphate. Its function is as follows. Catalyzes the attachment of alanine to tRNA(Ala) in a two-step reaction: alanine is first activated by ATP to form Ala-AMP and then transferred to the acceptor end of tRNA(Ala). Also edits incorrectly charged Ser-tRNA(Ala) and Gly-tRNA(Ala) via its editing domain. The protein is Alanine--tRNA ligase of Mycoplasma genitalium (strain ATCC 33530 / DSM 19775 / NCTC 10195 / G37) (Mycoplasmoides genitalium).